We begin with the raw amino-acid sequence, 145 residues long: Cell division protein SepF (145 aa).

The segment at 21-41 (DKPQESTKAKEENVKPKHETP) is disordered. Residues 23–41 (PQESTKAKEENVKPKHETP) show a composition bias toward basic and acidic residues.

This sequence belongs to the SepF family. As to quaternary structure, homodimer. Interacts with FtsZ.

The protein localises to the cytoplasm. Its function is as follows. Cell division protein that is part of the divisome complex and is recruited early to the Z-ring. Probably stimulates Z-ring formation, perhaps through the cross-linking of FtsZ protofilaments. Its function overlaps with FtsA. The protein is Cell division protein SepF of Caldicellulosiruptor saccharolyticus (strain ATCC 43494 / DSM 8903 / Tp8T 6331).